Reading from the N-terminus, the 166-residue chain is Large ribosomal subunit protein uL10 (166 aa).

The protein belongs to the universal ribosomal protein uL10 family. Part of the ribosomal stalk of the 50S ribosomal subunit. The N-terminus interacts with L11 and the large rRNA to form the base of the stalk. The C-terminus forms an elongated spine to which L12 dimers bind in a sequential fashion forming a multimeric L10(L12)X complex.

Its function is as follows. Forms part of the ribosomal stalk, playing a central role in the interaction of the ribosome with GTP-bound translation factors. In Bacillus velezensis (strain DSM 23117 / BGSC 10A6 / LMG 26770 / FZB42) (Bacillus amyloliquefaciens subsp. plantarum), this protein is Large ribosomal subunit protein uL10.